The primary structure comprises 194 residues: Adapter protein MecA 2 (194 aa).

The protein belongs to the MecA family. In terms of assembly, homodimer.

Enables the recognition and targeting of unfolded and aggregated proteins to the ClpC protease or to other proteins involved in proteolysis. Also involved in Spx degradation by ClpC. Acts negatively in the development of competence by binding ComK and recruiting it to the ClpCP protease. When overexpressed, inhibits sporulation. In Bacillus subtilis (strain 168), this protein is Adapter protein MecA 2 (mecB).